Here is a 361-residue protein sequence, read N- to C-terminus: sn-glycerol-3-phosphate import ATP-binding protein UgpC (361 aa).

The ABC transporter domain maps to 4–235 (VTLRNVRKTY…PATTFVASFI (232 aa)). ATP is bound at residue 37 to 44 (GPSGCGKS).

Belongs to the ABC transporter superfamily. sn-glycerol-3-phosphate importer (TC 3.A.1.1.3) family. As to quaternary structure, the complex is composed of two ATP-binding proteins (UgpC), two transmembrane proteins (UgpA and UgpE) and a solute-binding protein (UgpB).

Its subcellular location is the cell inner membrane. The enzyme catalyses sn-glycerol 3-phosphate(out) + ATP + H2O = sn-glycerol 3-phosphate(in) + ADP + phosphate + H(+). Functionally, part of the ABC transporter complex UgpBAEC involved in sn-glycerol-3-phosphate (G3P) import. Responsible for energy coupling to the transport system. This is sn-glycerol-3-phosphate import ATP-binding protein UgpC from Rhodopseudomonas palustris (strain BisA53).